The following is a 103-amino-acid chain: Large ribosomal subunit protein uL24 (103 aa).

This sequence belongs to the universal ribosomal protein uL24 family. Part of the 50S ribosomal subunit.

In terms of biological role, one of two assembly initiator proteins, it binds directly to the 5'-end of the 23S rRNA, where it nucleates assembly of the 50S subunit. One of the proteins that surrounds the polypeptide exit tunnel on the outside of the subunit. The polypeptide is Large ribosomal subunit protein uL24 (Actinobacillus succinogenes (strain ATCC 55618 / DSM 22257 / CCUG 43843 / 130Z)).